The sequence spans 163 residues: Photosystem II extrinsic protein V (163 aa).

A signal peptide spans 1–26 (MFKKSYQFFALVLFSIFNVLVTSASA). 4 residues coordinate heme c: C63, C66, H67, and H118.

This sequence belongs to the cytochrome c family. PsbV subfamily. PSII is composed of 1 copy each of membrane proteins PsbA, PsbB, PsbC, PsbD, PsbE, PsbF, PsbH, PsbI, PsbJ, PsbK, PsbL, PsbM, PsbT, PsbY, PsbZ, Psb30/Ycf12, at least 3 peripheral proteins of the oxygen-evolving complex and a large number of cofactors. It forms dimeric complexes. Requires heme c as cofactor.

It is found in the plastid. The protein resides in the chloroplast thylakoid membrane. One of the extrinsic, lumenal subunits of photosystem II (PSII). PSII is a light-driven water plastoquinone oxidoreductase, using light energy to abstract electrons from H(2)O, generating a proton gradient subsequently used for ATP formation. The extrinsic proteins stabilize the structure of photosystem II oxygen-evolving complex (OEC), the ion environment of oxygen evolution and protect the OEC against heat-induced inactivation. The sequence is that of Photosystem II extrinsic protein V from Trieres chinensis (Marine centric diatom).